Reading from the N-terminus, the 328-residue chain is 3-ketodihydrosphingosine reductase TSC10 (328 aa).

L16 is an NADP(+) binding site. 3 residues coordinate NADPH: G19, S21, and G23. Positions 19-23 (GASQG) match the GXSXG motif. L24 serves as a coordination point for NADP(+). NADPH is bound by residues R44, K48, and D73. An NADP(+)-binding site is contributed by D73. Catalysis depends on S161, which acts as the Proton donor. Residues Y175, K179, and S210 each contribute to the NADP(+) site. The active-site Proton acceptor is Y175. K179 serves as the catalytic Lowers pKa of active site Tyr. A helical transmembrane segment spans residues 277–297 (FFQVIVSFIFSIIAPIANYVV).

This sequence belongs to the short-chain dehydrogenases/reductases (SDR) family.

The protein resides in the endoplasmic reticulum membrane. It catalyses the reaction sphinganine + NADP(+) = 3-oxosphinganine + NADPH + H(+). It functions in the pathway lipid metabolism; sphingolipid metabolism. Functionally, catalyzes the reduction of 3'-oxosphinganine (3-ketodihydrosphingosine/KDS) to sphinganine (dihydrosphingosine/DHS), the second step of de novo sphingolipid biosynthesis. This is 3-ketodihydrosphingosine reductase TSC10 (TSC10) from Debaryomyces hansenii (strain ATCC 36239 / CBS 767 / BCRC 21394 / JCM 1990 / NBRC 0083 / IGC 2968) (Yeast).